A 1642-amino-acid chain; its full sequence is Cortactin-binding protein 2 (1642 aa).

Disordered regions lie at residues M1 to A27, K203 to E222, I366 to L433, G446 to S471, and R491 to D611. The stretch at R119 to K276 forms a coiled coil. A compositionally biased stretch (polar residues) spans G385–L394. Over residues T395–P407 the composition is skewed to low complexity. An Asymmetric dimethylarginine modification is found at R491. The span at A497–P506 shows a compositional bias: pro residues. The span at T576–Q586 shows a compositional bias: polar residues. ANK repeat units lie at residues G702–Y732, D736–A765, N769–H798, G802–V831, D835–G864, and E904–R934. The segment at S1441 to S1469 is disordered. Residue S1513 is modified to Phosphoserine. The segment at L1545–K1642 is disordered. 2 stretches are compositionally biased toward polar residues: residues G1552–N1563 and K1571–K1588. The span at S1613 to Q1627 shows a compositional bias: low complexity.

As to quaternary structure, interacts with CTTN/cortactin SH3 domain. Interacts with STRN, STRN4/zinedin and MOB4/phocein; this interactions mediate the association with the STRIPAK core complex and may regulate dendritic spine distribution of the STRIPAK complex in hippocampal neurons. Activation of glutamate receptors weakens the interaction with STRN and STRN4.

Its subcellular location is the cytoplasm. It is found in the cell cortex. The protein localises to the cell projection. The protein resides in the dendritic spine. Functionally, regulates the dendritic spine distribution of CTTN/cortactin in hippocampal neurons, and thus controls dendritic spinogenesis and dendritic spine maintenance. Associates with the striatin-interacting phosphatase and kinase (STRIPAK) core complex to regulate dendritic spine distribution of the STRIPAK complex in hippocampal neurons. The polypeptide is Cortactin-binding protein 2 (CTTNBP2) (Muntiacus muntjak (Barking deer)).